Here is a 238-residue protein sequence, read N- to C-terminus: Ribosomal RNA small subunit methyltransferase G (238 aa).

S-adenosyl-L-methionine-binding positions include Gly-77, Phe-82, 128 to 129 (AE), and Arg-147.

It belongs to the methyltransferase superfamily. RNA methyltransferase RsmG family.

It localises to the cytoplasm. Its function is as follows. Specifically methylates the N7 position of guanine in position 535 of 16S rRNA. The chain is Ribosomal RNA small subunit methyltransferase G from Geobacillus kaustophilus (strain HTA426).